The primary structure comprises 275 residues: Phosphonoacetaldehyde hydrolase (275 aa).

Aspartate 15 functions as the Nucleophile in the catalytic mechanism. Residues aspartate 15 and alanine 17 each contribute to the Mg(2+) site. Catalysis depends on lysine 56, which acts as the Schiff-base intermediate with substrate. Position 189 (aspartate 189) interacts with Mg(2+).

The protein belongs to the HAD-like hydrolase superfamily. PhnX family. As to quaternary structure, homodimer. The cofactor is Mg(2+).

It carries out the reaction phosphonoacetaldehyde + H2O = acetaldehyde + phosphate + H(+). Its function is as follows. Involved in phosphonate degradation. This is Phosphonoacetaldehyde hydrolase from Pseudomonas entomophila (strain L48).